The chain runs to 550 residues: Atherin (550 aa).

Residues 1–11 (MAGPPALPPPE) show a composition bias toward pro residues. 2 disordered regions span residues 1–32 (MAGPPALPPPETAAAATTAAAAASSSAASPHY) and 93–468 (SYRN…KEKP). Residues 12–30 (TAAAATTAAAAASSSAASP) show a composition bias toward low complexity. The region spanning 24–100 (SSSAASPHYQ…SISYRNAARV (77 aa)) is the SAMD1-like winged helix (WH) domain. Thr-108 carries the phosphothreonine modification. Pro residues predominate over residues 125-138 (APPPTPAPPPPPAP). The span at 139–160 (VAAAAAPARAPRAAAAAAAATA) shows a compositional bias: low complexity. The residue at position 163 (Ser-163) is a Phosphoserine. Over residues 170–179 (GPRAQRAAPL) the composition is skewed to low complexity. Composition is skewed to pro residues over residues 180–205 (AAPPPAPAAPPAAAPPAGPRRAPPPA) and 214–245 (PLPPPPQPPAPPQQQQQPPPPPPPQQPQPPPE). The segment covering 246 to 257 (GGAARAGGPARP) has biased composition (low complexity). Ser-270 bears the Phosphoserine mark. Positions 290 to 300 (AAARGRLERTR) are enriched in basic and acidic residues. Over residues 337–355 (KEEEEEEEEDDEDDDDDVV) the composition is skewed to acidic residues. The span at 437–448 (SPSPVPLPPGKP) shows a compositional bias: pro residues. The 69-residue stretch at 474 to 542 (WTVMDVVEYF…KVLQQGHFED (69 aa)) folds into the SAM domain.

In terms of assembly, homopolymerize into a closed pentameric ring. Interacts (via SAM domain) with L3MBTL3 (via SAM domain); the interaction mediates L3MBTL3 binding to chromatin. Interacts (via WH domain) with KDM1A; the interaction modulates KDM1A function.

Its subcellular location is the nucleus. It is found in the chromosome. It localises to the secreted. Functionally, unmethylated CpG islands (CGIs)-binding protein which localizes to H3K4me3-decorated CGIs, where it acts as a transcriptional repressor. Tethers L3MBTL3 to chromatin and interacts with the KDM1A histone demethylase complex to modulate H3K4me2 and H3K4me3 levels at CGIs. Plays a role in atherogenesis by binding with LDL on cell surface and promoting LDL oxidation which leads to the formation of foam cell. This chain is Atherin (SAMD1), found in Oryctolagus cuniculus (Rabbit).